Here is a 486-residue protein sequence, read N- to C-terminus: Probable glycine dehydrogenase (decarboxylating) subunit 2 (486 aa).

Lys269 is modified (N6-(pyridoxal phosphate)lysine).

Belongs to the GcvP family. C-terminal subunit subfamily. As to quaternary structure, the glycine cleavage system is composed of four proteins: P, T, L and H. In this organism, the P 'protein' is a heterodimer of two subunits. The cofactor is pyridoxal 5'-phosphate.

The catalysed reaction is N(6)-[(R)-lipoyl]-L-lysyl-[glycine-cleavage complex H protein] + glycine + H(+) = N(6)-[(R)-S(8)-aminomethyldihydrolipoyl]-L-lysyl-[glycine-cleavage complex H protein] + CO2. In terms of biological role, the glycine cleavage system catalyzes the degradation of glycine. The P protein binds the alpha-amino group of glycine through its pyridoxal phosphate cofactor; CO(2) is released and the remaining methylamine moiety is then transferred to the lipoamide cofactor of the H protein. The polypeptide is Probable glycine dehydrogenase (decarboxylating) subunit 2 (Chlorobium phaeobacteroides (strain DSM 266 / SMG 266 / 2430)).